Here is a 326-residue protein sequence, read N- to C-terminus: UDP-N-acetylglucosamine transporter (326 aa).

8 consecutive transmembrane segments (helical) span residues 4–24 (NLKYLSLGILVFQTTSLVLTM), 38–58 (LSSTAVVVAELLKIMACILLV), 136–156 (LGVYQWLSLVILMTGVAFVQW), 174–194 (FVGLMAVLTACFSSGFAGVYF), 212–232 (LGFFGSIFGLMGVYVYDGELV), 244–264 (LTWIVVVLQALGGLVIAAVIK), 269–289 (ILKGFATSLSIILSTLISYFW), and 293–313 (FVPTSVFFLGAILVITATFLY).

This sequence belongs to the nucleotide-sugar transporter family. SLC35A subfamily. In terms of assembly, interacts with SLC35A2; the interaction is reduced in the presence of SLC35A4. Found in a complex with SLC35A2 and SLC35A4. Interacts with MGAT4B. Post-translationally, O-Glcnacylation regulates the stability of SLC35A3 and the specific complex formation with MGAT4B.

It is found in the golgi apparatus membrane. The catalysed reaction is UMP(out) + UDP-N-acetyl-alpha-D-glucosamine(in) = UMP(in) + UDP-N-acetyl-alpha-D-glucosamine(out). Its function is as follows. Transports diphosphate-N-acetylglucosamine (UDP-GlcNAc) from the cytosol into the lumen of the Golgi apparatus, functioning as an antiporter that exchanges UDP-N-acetyl-alpha-D-glucosamine for UMP. May supply UDP-GlcNAc as substrate for Golgi-resident glycosyltransferases that generate highly branched, multiantennary complex N-glycans and keratan sulfate. However, the exact role of SLC35A3 still needs to be elucidated, it could be a member of a catalytically more efficient multiprotein complex rather than function independently as a single transporter. The sequence is that of UDP-N-acetylglucosamine transporter (SLC35A3) from Bos taurus (Bovine).